A 585-amino-acid polypeptide reads, in one-letter code: MNIFADFDARIKKTLQDIDLKPKDGGDLDLSRIGVEPPRDSSHGDIATNAAMVLSKAVGQNPRELAGRIAEALASDADVETVDVAGPGFINLRLKATYWQRELSAMLNEGKDFGRSKLGAGSKVNVEYVSANPTGPMHVGHCRGAVVGDVLANLLKFAGYDVVKEYYINDAGAQIDVLARSVMLRYREALGENIGEIPSGLYPGDYLVPVGQELAKEFGSKLLEMPEAEALALVKDRTIDAMMAMIRADLDALNVHHDVFFSERKLHVDHARAIRNAINDLTLKGHVYKGKLPPPKGQLPEDWEDREQTLFRSTEVGDDIDRPLMKSDGAFTYFAGDVAYFKDKYDRGFNEMIYVLGADHGGYVKRLEAVARAVSDGKAKLTVLLCQLVKLFRDGEPVRMSKRSGEFITLRDVVDEVGRDPVRFMMLYRKNDAPLDFDFAKVTEQSKDNPVFYVQYASARCHSVFRQAADQLGLADLDRVGMAAHFDKLTDESEIALVRKLAEYPRLIEAAAIHQEPHRLAFYLYDLASAFHSQWNRGTENPDLRFIKVNDPDLSLARLGLVQVVSDVLTSGLTIIGADAPTEMR.

The 'HIGH' region motif lies at 131-141; sequence ANPTGPMHVGH.

It belongs to the class-I aminoacyl-tRNA synthetase family. In terms of assembly, monomer.

It localises to the cytoplasm. It carries out the reaction tRNA(Arg) + L-arginine + ATP = L-arginyl-tRNA(Arg) + AMP + diphosphate. The sequence is that of Arginine--tRNA ligase from Brucella anthropi (strain ATCC 49188 / DSM 6882 / CCUG 24695 / JCM 21032 / LMG 3331 / NBRC 15819 / NCTC 12168 / Alc 37) (Ochrobactrum anthropi).